The following is a 96-amino-acid chain: Phosphoribosyl-ATP pyrophosphatase (96 aa).

It belongs to the PRA-PH family.

The protein localises to the cytoplasm. It catalyses the reaction 1-(5-phospho-beta-D-ribosyl)-ATP + H2O = 1-(5-phospho-beta-D-ribosyl)-5'-AMP + diphosphate + H(+). It participates in amino-acid biosynthesis; L-histidine biosynthesis; L-histidine from 5-phospho-alpha-D-ribose 1-diphosphate: step 2/9. The protein is Phosphoribosyl-ATP pyrophosphatase of Methanococcus maripaludis (strain DSM 14266 / JCM 13030 / NBRC 101832 / S2 / LL).